A 506-amino-acid polypeptide reads, in one-letter code: Trans-cinnamate 4-monooxygenase C4H1 (506 aa).

Short sequence motifs (nuclear localization signal) lie at residues 161-168 (VKKMPESA) and 247-254 (QRRLQLFK). Cys448 serves as a coordination point for heme.

Belongs to the cytochrome P450 family. The cofactor is heme.

The protein localises to the nucleus. It carries out the reaction (E)-cinnamate + reduced [NADPH--hemoprotein reductase] + O2 = (E)-4-coumarate + oxidized [NADPH--hemoprotein reductase] + H2O + H(+). It participates in phenylpropanoid metabolism; trans-4-coumarate biosynthesis; trans-4-coumarate from trans-cinnamate: step 1/1. In terms of biological role, component of the floral volatile benzenoid/phenylpropanoid (FVBP) biosynthetic pathway that controls carbon flux to pigments essential for pollination or UV protection, to numerous pytoalexins synthesized by plants when challenged by pathogens, and to lignins. This chain is Trans-cinnamate 4-monooxygenase C4H1, found in Petunia hybrida (Petunia).